The primary structure comprises 77 residues: Bradykinin-potentiating peptide (77 aa).

Residues 1–22 (MNKKTLLVIFIVTLLIADEVNS) form the signal peptide. A propeptide spanning residues 74–77 (RRRR) is cleaved from the precursor.

This sequence belongs to the non-disulfide-bridged peptide (NDBP) superfamily. Long chain multifunctional peptide (group 2) family. In terms of tissue distribution, expressed by the venom gland.

The protein localises to the secreted. In terms of biological role, antimicrobial peptide. May also inhibit angiotensin-converting enzyme (ACE) and potentiate bradykinin (BK). The sequence is that of Bradykinin-potentiating peptide from Tityus discrepans (Venezuelan scorpion).